The sequence spans 1773 residues: Plexin-2 (1773 aa).

The signal sequence occupies residues 1-19 (MLFIESAFLVLTSLSAAEA). Residues 20-436 (ATPFEGGVKQ…MPYGIVMEEL (417 aa)) form the Sema domain. The Extracellular portion of the chain corresponds to 20–1130 (ATPFEGGVKQ…SDHALPSRLS (1111 aa)). Residue N65 is glycosylated (N-linked (GlcNAc...) asparagine). 9 disulfide bridges follow: C83/C90, C117/C125, C239/C341, C255/C292, C310/C328, C439/C456, C445/C479, C448/C465, and C459/C471. The N-linked (GlcNAc...) asparagine glycan is linked to N241. Residues 438 to 480 (TCAHHESCTDCQVSVDPLCQWCHPTQSCTTSSRCSGPLTTQCP) enclose the PSI 1 domain. Residue N494 is glycosylated (N-linked (GlcNAc...) asparagine). A disulfide bridge links C516 with C538. N566 carries an N-linked (GlcNAc...) asparagine glycan. The 38-residue stretch at 571–608 (DCAGYSTCSTCMSSEFGCQWCSHKCSSSCGSASAKACV) folds into the PSI 2 domain. 2 N-linked (GlcNAc...) asparagine glycosylation sites follow: N670 and N693. The 42-residue stretch at 698–739 (SCSNLAADCSSCLALSPSLSCGWCNRKCSHECHESKATAVCD) folds into the PSI 3 domain. IPT/TIG domains lie at 741–829 (PKID…FSFV), 831–916 (VSIF…FEYR), and 919–1006 (PSVN…FLMD). 4 N-linked (GlcNAc...) asparagine glycosylation sites follow: N855, N877, N975, and N1007. The chain crosses the membrane as a helical span at residues 1131 to 1151 (FLILGLLLFTVITLIVMCLIF). A coiled-coil region spans residues 1150–1188 (IFKRRRQEREKEYRKIQLQMENLENNVRKECKQAFAELQ). Residues 1152–1764 (KRRRQEREKE…LHVCLETDNH (613 aa)) are Cytoplasmic-facing.

This sequence belongs to the plexin family. In terms of assembly, interacts with mab-20.

It is found in the cell membrane. In terms of biological role, involved as a receptor for mab-20/sema-2a in the formation or stabilization of cell-cell contacts at several stages of epithelial morphogenesis. In early embryonic development, required for proper ventral closure of the epidermis. During male tail morphogenesis, involved in precursor cell sorting and in the formation of distinct sensory rays. Involved in axon guidance of SDQL neurons during neurogenesis. The polypeptide is Plexin-2 (plx-2) (Caenorhabditis briggsae).